The following is a 204-amino-acid chain: Urease accessory protein UreG (204 aa).

11 to 18 (GPVGAGKH) lines the GTP pocket.

It belongs to the SIMIBI class G3E GTPase family. UreG subfamily. Homodimer. UreD, UreF and UreG form a complex that acts as a GTP-hydrolysis-dependent molecular chaperone, activating the urease apoprotein by helping to assemble the nickel containing metallocenter of UreC. The UreE protein probably delivers the nickel.

It is found in the cytoplasm. Facilitates the functional incorporation of the urease nickel metallocenter. This process requires GTP hydrolysis, probably effectuated by UreG. In Staphylococcus xylosus, this protein is Urease accessory protein UreG.